The primary structure comprises 309 residues: uncharacterized protein (309 aa).

Basic residues predominate over residues 1 to 11 (MPGNSRRRGAV). Positions 1 to 69 (MPGNSRRRGA…PVKRTDETET (69 aa)) are disordered. Residues Gly-261, Ile-281, and Leu-290 each coordinate S-adenosyl-L-methionine.

Belongs to the class IV-like SAM-binding methyltransferase superfamily. RNA methyltransferase TrmH family.

This is an uncharacterized protein from Mycobacterium leprae (strain TN).